Here is a 289-residue protein sequence, read N- to C-terminus: Metal-staphylopine import system permease protein CntC (289 aa).

A run of 5 helical transmembrane segments spans residues 13-33 (AVIA…APLV), 77-97 (LLYV…LGFL), 115-135 (VMLA…FGMG), 194-214 (IAII…GFSF), and 249-269 (IAIV…QIAI). An ABC transmembrane type-1 domain is found at 73–262 (IRPSLLYVFV…IIVMAFNFLS (190 aa)).

Belongs to the binding-protein-dependent transport system permease family. As to quaternary structure, the complex is composed of two ATP-binding proteins (CntD and CntF), two transmembrane proteins (CntB and CntC) and a solute-binding protein (CntA).

Its subcellular location is the cell membrane. Nickel/cobalt import is reduced in the presence of zinc. Its function is as follows. Part of the ABC transporter complex CntABCDF (Opp1) involved in the uptake of metal in complex with the metallophore staphylopine (StP). Involved in the import of divalent metals ions such as nickel, cobalt and zinc. Probably responsible for the translocation of the substrate across the membrane. Plays a major role in nickel/cobalt import in zinc-depleted conditions. Contributes to virulence. Required for full urease activity in vitro. The chain is Metal-staphylopine import system permease protein CntC from Staphylococcus aureus (strain NCTC 8325 / PS 47).